A 475-amino-acid polypeptide reads, in one-letter code: Probable 5'-adenylylsulfate reductase 1, chloroplastic (475 aa).

The N-terminal 63 residues, M1–S63, are a transit peptide targeting the chloroplast. Residues A72 to G327 form a reductase domain region. In terms of domain architecture, Thioredoxin spans H341 to R475. Catalysis depends on nucleophile residues C393 and C396. The cysteines at positions 393 and 396 are disulfide-linked.

The protein belongs to the APS reductase family. The cofactor is [4Fe-4S] cluster.

The protein localises to the plastid. Its subcellular location is the chloroplast. It catalyses the reaction glutathione disulfide + sulfite + AMP + 2 H(+) = adenosine 5'-phosphosulfate + 2 glutathione. Functionally, reduces sulfate for Cys biosynthesis. The polypeptide is Probable 5'-adenylylsulfate reductase 1, chloroplastic (APR1) (Oryza sativa subsp. japonica (Rice)).